Reading from the N-terminus, the 1483-residue chain is Chromosome partition protein MukB (1483 aa).

An ATP-binding site is contributed by 34 to 41 (GGNGAGKS). Coiled-coil stretches lie at residues 311 to 426 (EMAR…LQRA) and 547 to 607 (GQQV…WLAA). The interval 666 to 783 (PGGSEDARLN…KVPLFGRAAR (118 aa)) is flexible hinge. 2 coiled-coil regions span residues 835–1115 (EAAL…SAKA) and 1206–1266 (DDPV…QAVS). The interval 850–870 (RELNNHESENQQQRQQYEQAK) is disordered.

The protein belongs to the SMC family. MukB subfamily. In terms of assembly, homodimerization via its hinge domain. Binds to DNA via its C-terminal region. Interacts, and probably forms a ternary complex, with MukE and MukF via its C-terminal region. The complex formation is stimulated by calcium or magnesium. Interacts with tubulin-related protein FtsZ.

It is found in the cytoplasm. Its subcellular location is the nucleoid. Its function is as follows. Plays a central role in chromosome condensation, segregation and cell cycle progression. Functions as a homodimer, which is essential for chromosome partition. Involved in negative DNA supercoiling in vivo, and by this means organize and compact chromosomes. May achieve or facilitate chromosome segregation by condensation DNA from both sides of a centrally located replisome during cell division. The chain is Chromosome partition protein MukB from Erwinia tasmaniensis (strain DSM 17950 / CFBP 7177 / CIP 109463 / NCPPB 4357 / Et1/99).